We begin with the raw amino-acid sequence, 110 residues long: Nucleoid-associated protein Mvan_5528 (110 aa).

The protein belongs to the YbaB/EbfC family. As to quaternary structure, homodimer.

The protein localises to the cytoplasm. Its subcellular location is the nucleoid. Binds to DNA and alters its conformation. May be involved in regulation of gene expression, nucleoid organization and DNA protection. The sequence is that of Nucleoid-associated protein Mvan_5528 from Mycolicibacterium vanbaalenii (strain DSM 7251 / JCM 13017 / BCRC 16820 / KCTC 9966 / NRRL B-24157 / PYR-1) (Mycobacterium vanbaalenii).